The chain runs to 151 residues: Small ribosomal subunit protein uS15 (151 aa).

It belongs to the universal ribosomal protein uS15 family.

In Spodoptera frugiperda (Fall armyworm), this protein is Small ribosomal subunit protein uS15 (RpS13).